Consider the following 395-residue polypeptide: Multidrug resistance protein MdtL (395 aa).

A run of 12 helical transmembrane segments spans residues Phe-4–Val-24, Ile-42–Ala-62, Pro-69–Ser-89, Leu-93–Phe-113, Leu-131–Met-151, Ser-158–Leu-178, Val-217–Phe-237, Ala-247–Phe-267, Thr-271–His-291, Val-295–Met-315, Leu-333–Ile-353, and Met-358–Ala-378.

It belongs to the major facilitator superfamily. DHA1 family. MdtL (TC 2.A.1.2.22) subfamily.

The protein localises to the cell inner membrane. This is Multidrug resistance protein MdtL from Salmonella heidelberg (strain SL476).